Reading from the N-terminus, the 461-residue chain is Secreted 45 kDa protein (461 aa).

A signal peptide spans 1 to 27 (MKKKIISAILMSTVILSAAAPLSGVYA). The span at 264–329 (SSASASSSQA…GNTNSGTSTG (66 aa)) shows a compositional bias: low complexity. A disordered region spans residues 264–343 (SSASASSSQA…TTTGGSGINS (80 aa)). Gly residues predominate over residues 330-340 (NTGGTTTGGSG). The region spanning 330 to 459 (NTGGTTTGGS…VSASGVTFLM (130 aa)) is the Peptidase C51 domain.

The sequence is that of Secreted 45 kDa protein (usp45) from Lactococcus lactis subsp. cremoris (strain MG1363).